Here is a 328-residue protein sequence, read N- to C-terminus: Carbonic anhydrase-related protein 11 (328 aa).

Positions 1 to 23 (MGAAARLSAPRALVLWAALGAAA) are cleaved as a signal peptide. The Alpha-carbonic anhydrase domain occupies 33–303 (DWWSYKDNLQ…LAHRALRGNR (271 aa)). Residues asparagine 118, asparagine 170, and asparagine 260 are each glycosylated (N-linked (GlcNAc...) asparagine). Positions 299–328 (LRGNRDPRHPERRCRGPNYRLHVDGAPHGR) are disordered. The segment covering 319-328 (LHVDGAPHGR) has biased composition (basic and acidic residues).

It belongs to the alpha-carbonic anhydrase family.

The protein resides in the secreted. Does not have a catalytic activity. The polypeptide is Carbonic anhydrase-related protein 11 (CA11) (Pongo abelii (Sumatran orangutan)).